The following is a 362-amino-acid chain: Cap-specific mRNA (nucleoside-2'-O-)-methyltransferase 1 (362 aa).

Positions 87–294 (SFGNRAGHKL…ERYLVCLGFL (208 aa)) constitute a RrmJ-type SAM-dependent 2'-O-MTase domain. Residues G130 and D207 each coordinate S-adenosyl-L-methionine. The Proton acceptor role is filled by K248.

Its subcellular location is the nucleus. It carries out the reaction a 5'-end (N(7)-methyl 5'-triphosphoguanosine)-ribonucleoside in mRNA + S-adenosyl-L-methionine = a 5'-end (N(7)-methyl 5'-triphosphoguanosine)-(2'-O-methyl-ribonucleoside) in mRNA + S-adenosyl-L-homocysteine + H(+). Its function is as follows. S-adenosyl-L-methionine-dependent methyltransferase that mediates RNA cap1 2'-O-ribose methylation to the 5'-cap structure of spliced leader and U1 small nuclear RNAs. Methylates the ribose of the first nucleotide of a m(7)GpppG-capped RNA to produce m(7)GpppNmp (cap1). Cap1 modification is linked to higher levels of translation. Recognizes a guanosine cap on RNA independent of its N(7) methylation status. The sequence is that of Cap-specific mRNA (nucleoside-2'-O-)-methyltransferase 1 from Trypanosoma cruzi (strain CL Brener).